We begin with the raw amino-acid sequence, 1424 residues long: Serine/threonine-protein kinase LMTK3 (1424 aa).

Residues Met-1 to Ala-20 form the signal peptide. Residues Ala-40–Leu-60 form a helical membrane-spanning segment. The segment at Asn-74 to Gln-95 is disordered. Positions Leu-133–Leu-411 constitute a Protein kinase domain. ATP is bound by residues Ile-139 to Val-147 and Lys-164. Ser-232 carries the post-translational modification Phosphoserine. The Proton acceptor role is filled by Asp-266. Disordered stretches follow at residues Ser-413–Val-465 and Arg-486–Glu-516. Residues Arg-418–His-439 show a composition bias toward pro residues. Position 490 is an omega-N-methylarginine (Arg-490). Residues Pro-496 to His-507 show a composition bias toward pro residues. Phosphoserine occurs at positions 531 and 535. 5 disordered regions span residues Glu-544–Cys-666, Leu-680–Glu-964, Met-976–Thr-1024, Gly-1041–Lys-1313, and Leu-1325–Asn-1424. Over residues Gln-571–Trp-584 the composition is skewed to polar residues. Over residues Ala-638–Pro-647 the composition is skewed to acidic residues. The segment covering Pro-700–Ser-713 has biased composition (basic and acidic residues). Over residues Arg-744–Arg-758 the composition is skewed to pro residues. Over residues Ala-759 to Gly-791 the composition is skewed to low complexity. Residues Pro-818–Leu-841 are compositionally biased toward pro residues. Residues Asp-935–Ala-954 are compositionally biased toward basic and acidic residues. Ser-947, Ser-962, and Ser-977 each carry phosphoserine. Residues Arg-994–Pro-1004 are compositionally biased toward basic and acidic residues. A compositionally biased stretch (gly residues) spans Gly-1084–Gly-1094. The segment covering Thr-1095–Val-1105 has biased composition (low complexity). The segment covering Asp-1167–Glu-1177 has biased composition (basic and acidic residues). Positions Ser-1200–Pro-1213 are enriched in low complexity. Over residues Ala-1231 to Ala-1241 the composition is skewed to gly residues. Residues Ala-1245–Ala-1261 show a composition bias toward acidic residues. The segment covering Ala-1262 to Glu-1272 has biased composition (basic and acidic residues). Residues Glu-1329 to Gly-1339 show a composition bias toward polar residues. Positions Ser-1348–Thr-1360 are enriched in pro residues.

Belongs to the protein kinase superfamily. Tyr protein kinase family. As to quaternary structure, interacts with ESR1. Interacts with AP-2 complex subunit alpha. It depends on Mg(2+) as a cofactor. Autophosphorylated. Expressed in brain. Predominantly expressed in cerebral cortex, thalamus, the cerebellum and hippocampal formation (at protein level).

Its subcellular location is the membrane. The protein resides in the cell projection. The protein localises to the axon. It is found in the dendrite. It localises to the golgi apparatus membrane. It catalyses the reaction L-seryl-[protein] + ATP = O-phospho-L-seryl-[protein] + ADP + H(+). The enzyme catalyses L-threonyl-[protein] + ATP = O-phospho-L-threonyl-[protein] + ADP + H(+). Protein kinase which phosphorylates ESR1 (in vitro) and protects it against proteasomal degradation. May also regulate ESR1 levels indirectly via a PKC-AKT-FOXO3 pathway where it decreases the activity of PKC and the phosphorylation of AKT, thereby increasing binding of transcriptional activator FOXO3 to the ESR1 promoter and increasing ESR1 transcription. Involved in endocytic trafficking of N-methyl-D-aspartate receptors (NMDAR) in neurons. The chain is Serine/threonine-protein kinase LMTK3 (Lmtk3) from Mus musculus (Mouse).